An 86-amino-acid chain; its full sequence is Large ribosomal subunit protein bL31B (86 aa).

Belongs to the bacterial ribosomal protein bL31 family. Type B subfamily. As to quaternary structure, part of the 50S ribosomal subunit.

The polypeptide is Large ribosomal subunit protein bL31B (Streptococcus uberis (strain ATCC BAA-854 / 0140J)).